We begin with the raw amino-acid sequence, 206 residues long: Guanylate kinase (206 aa).

The Guanylate kinase-like domain occupies 5-184; that stretch reads GMLIVLSGPS…AAERIKAIIR (180 aa). Residue 12–19 participates in ATP binding; it reads GPSGVGKG.

It belongs to the guanylate kinase family.

The protein resides in the cytoplasm. The enzyme catalyses GMP + ATP = GDP + ADP. Functionally, essential for recycling GMP and indirectly, cGMP. In Lactiplantibacillus plantarum (strain ATCC BAA-793 / NCIMB 8826 / WCFS1) (Lactobacillus plantarum), this protein is Guanylate kinase.